Reading from the N-terminus, the 354-residue chain is Holliday junction branch migration complex subunit RuvB (354 aa).

Residues 4 to 190 (TDKLAAERII…FGIVARLEFY (187 aa)) are large ATPase domain (RuvB-L). ATP is bound by residues L29, R30, G71, K74, T75, T76, 137-139 (EDY), R180, Y190, and R227. T75 provides a ligand contact to Mg(2+). The small ATPAse domain (RuvB-S) stretch occupies residues 191–261 (NAEELARIVT…VADAALKMLD (71 aa)). The head domain (RuvB-H) stretch occupies residues 264 to 354 (AVGFDLMDRK…LPGLWDSAAT (91 aa)). Residues R300, R319, and R324 each contribute to the DNA site.

Belongs to the RuvB family. As to quaternary structure, homohexamer. Forms an RuvA(8)-RuvB(12)-Holliday junction (HJ) complex. HJ DNA is sandwiched between 2 RuvA tetramers; dsDNA enters through RuvA and exits via RuvB. An RuvB hexamer assembles on each DNA strand where it exits the tetramer. Each RuvB hexamer is contacted by two RuvA subunits (via domain III) on 2 adjacent RuvB subunits; this complex drives branch migration. In the full resolvosome a probable DNA-RuvA(4)-RuvB(12)-RuvC(2) complex forms which resolves the HJ.

It localises to the cytoplasm. The enzyme catalyses ATP + H2O = ADP + phosphate + H(+). Its function is as follows. The RuvA-RuvB-RuvC complex processes Holliday junction (HJ) DNA during genetic recombination and DNA repair, while the RuvA-RuvB complex plays an important role in the rescue of blocked DNA replication forks via replication fork reversal (RFR). RuvA specifically binds to HJ cruciform DNA, conferring on it an open structure. The RuvB hexamer acts as an ATP-dependent pump, pulling dsDNA into and through the RuvAB complex. RuvB forms 2 homohexamers on either side of HJ DNA bound by 1 or 2 RuvA tetramers; 4 subunits per hexamer contact DNA at a time. Coordinated motions by a converter formed by DNA-disengaged RuvB subunits stimulates ATP hydrolysis and nucleotide exchange. Immobilization of the converter enables RuvB to convert the ATP-contained energy into a lever motion, pulling 2 nucleotides of DNA out of the RuvA tetramer per ATP hydrolyzed, thus driving DNA branch migration. The RuvB motors rotate together with the DNA substrate, which together with the progressing nucleotide cycle form the mechanistic basis for DNA recombination by continuous HJ branch migration. Branch migration allows RuvC to scan DNA until it finds its consensus sequence, where it cleaves and resolves cruciform DNA. This chain is Holliday junction branch migration complex subunit RuvB, found in Paraburkholderia phytofirmans (strain DSM 17436 / LMG 22146 / PsJN) (Burkholderia phytofirmans).